The chain runs to 58 residues: SPbeta prophage-derived uncharacterized protein YotN (58 aa).

The protein is SPbeta prophage-derived uncharacterized protein YotN (yotN) of Bacillus subtilis (strain 168).